Reading from the N-terminus, the 242-residue chain is EF-hand domain-containing protein D2 (242 aa).

Positions 1–53 (MATDELASKLSRRLQMEGEGGGEAPEQPGLNGAAAAAAAAGAPDETAEALGSA) are disordered. Alanine 2 is modified (N-acetylalanine). Phosphoserine is present on serine 11. The span at 32 to 42 (GAAAAAAAAGA) shows a compositional bias: low complexity. Residues serine 76 and serine 78 each carry the phosphoserine modification. A Phosphotyrosine modification is found at tyrosine 85. 2 consecutive EF-hand domains span residues 94–129 (KQIK…LGAP) and 130–165 (QTHL…AAAG). Ca(2+)-binding residues include aspartate 107, aspartate 111, glutamate 118, aspartate 143, aspartate 145, aspartate 147, lysine 149, and glutamate 154. Lysine 235 carries the post-translational modification N6-acetyllysine.

In terms of assembly, interacts with CASP9; with inactive form.

It localises to the membrane raft. Its function is as follows. May regulate B-cell receptor (BCR)-induced immature and primary B-cell apoptosis. Plays a role as negative regulator of the canonical NF-kappa-B-activating branch. Controls spontaneous apoptosis through the regulation of BCL2L1 abundance. This is EF-hand domain-containing protein D2 (EFHD2) from Bos taurus (Bovine).